Reading from the N-terminus, the 958-residue chain is Atromentin synthetase greA (958 aa).

The interval 60–465 is adenylation (A) domain; it reads SIQTKTFSAF…SGRIKDTVIV (406 aa). In terms of domain architecture, Carrier spans 597-675; sequence APSTETEKAL…SLANYVNALL (79 aa). The thiolation and peptide carrier (T) domain stretch occupies residues 602 to 672; that stretch reads TEKALAKIYA…VVSSLANYVN (71 aa). At S634 the chain carries O-(pantetheine 4'-phosphoryl)serine. The segment at 698–946 is thioesterase (TE) domain; that stretch reads PIFFVHPGVG…MDFDHVPQFQ (249 aa).

Belongs to the ATP-dependent AMP-binding enzyme family.

It functions in the pathway secondary metabolite biosynthesis. An L-tyrosine:2-oxoglutarate aminotransferase and atromentin synthetase greA catalyze consecutive steps to turn over L-tyrosine into atromentin, which represents the generic precursor molecule for the entire terphenylquinone and pulvinic acid family of pigments, which are widely distributed secondary metabolites in homobasidiomycetes. The first step catalyzed by the aminotransferase converts L-tyrosine in to 4-hydroxyphenylpyruvate (4-HPP). Adenylation of two 4-HPP monomers by the greA adenylation (A) domain, covalent tethering of the monomers as a thioester and oxoester onto the greA thiolation (T) and thioesterase (TE) domains, respectively, and symmetric C-C-bond formation between two monomers catalyzed by the greA TE domain leads to atromentin. This Suillus grevillei (Larch bolete) protein is Atromentin synthetase greA (greA).